A 41-amino-acid chain; its full sequence is Large ribosomal subunit protein bL36 (41 aa).

This sequence belongs to the bacterial ribosomal protein bL36 family.

This Xylella fastidiosa (strain 9a5c) protein is Large ribosomal subunit protein bL36.